Reading from the N-terminus, the 531-residue chain is 5-(hydroxymethyl)furfural oxidase (531 aa).

Residues 15-16 (TA), 36-37 (EA), Trp68, Leu94, Gly98, 102-105 (NMVV), Val233, and Trp466 contribute to the FAD site. His467 acts as the Proton acceptor in catalysis. FAD contacts are provided by residues Ala501 and 512-513 (TN).

Belongs to the GMC oxidoreductase family. In terms of assembly, monomer. The cofactor is FAD.

The catalysed reaction is 5-hydroxymethylfurfural + 3 O2 + 2 H2O = 2,5-dicarboxyfuran + 3 H2O2 + 2 H(+). It carries out the reaction benzylthiol + O2 = benzothialdehyde + H2O2. Functionally, involved in the degradation and detoxification of 5-(hydroxymethyl)furfural (HMF) by mediating its oxidation to furan-2,5-dicarboxylate (FDCA), a biobased platform chemical for the production of polymers. Active with a wide range of aromatic and aliphatic primary alcohols and aldehydes: acts on alcohol groups and requires the spontaneous hydration of aldehyde groups for their oxidation. To a lesser extent, is also able to catalyze the oxidation of thiols that are structurally similar to its alcohol substrates, yielding the corresponding thiocarbonyls. The polypeptide is 5-(hydroxymethyl)furfural oxidase (Methylovorus sp. (strain MP688)).